A 90-amino-acid polypeptide reads, in one-letter code: Small ribosomal subunit protein uS15 (90 aa).

Belongs to the universal ribosomal protein uS15 family. In terms of assembly, part of the 30S ribosomal subunit. Forms a bridge to the 50S subunit in the 70S ribosome, contacting the 23S rRNA.

Its function is as follows. One of the primary rRNA binding proteins, it binds directly to 16S rRNA where it helps nucleate assembly of the platform of the 30S subunit by binding and bridging several RNA helices of the 16S rRNA. Functionally, forms an intersubunit bridge (bridge B4) with the 23S rRNA of the 50S subunit in the ribosome. This is Small ribosomal subunit protein uS15 from Campylobacter lari (strain RM2100 / D67 / ATCC BAA-1060).